Reading from the N-terminus, the 526-residue chain is Microphthalmia-associated transcription factor (526 aa).

A disordered region spans residues 1-54 (MQSESGIVPDFEVGEEFHEEPKTYYELKSQPLKSSSSAEHPGASKPPISSSSMT). Ser-5 bears the Phosphoserine; by MTOR mark. The segment covering 15–25 (EEFHEEPKTYY) has biased composition (basic and acidic residues). The segment covering 41–54 (PGASKPPISSSSMT) has biased composition (low complexity). Position 180 is a phosphoserine; by MAPK (Ser-180). Positions 224 to 295 (DDVIDDIISL…PNIKRELTAC (72 aa)) are transactivation. Residue Ser-280 is modified to Phosphoserine; by MARK3. Lys-289 is covalently cross-linked (Glycyl lysine isopeptide (Lys-Gly) (interchain with G-Cter in SUMO)). In terms of domain architecture, bHLH spans 311-364 (QKKDNHNLIERRRRFNINDRIKELGTLIPKSNDPDMRWNKGTILKASVDYIRKL). Positions 355–402 (KASVDYIRKLQREQQRAKELENRQKKLEHANRHLLLRIQELEMQARAH) form a coiled coil. The segment at 374 to 395 (LENRQKKLEHANRHLLLRIQEL) is leucine-zipper. The DNA-binding regulation stretch occupies residues 401-431 (AHGLSLIPSTGLCSPDLVNRIIKQEPVLENC). The residue at position 405 (Ser-405) is a Phosphoserine; by GSK3. The residue at position 414 (Ser-414) is a Phosphoserine. Residue Lys-423 forms a Glycyl lysine isopeptide (Lys-Gly) (interchain with G-Cter in SUMO) linkage. Position 491 is a phosphoserine (Ser-491). Positions 496–526 (TDPLLSSVSPGASKTSSRRSSMSMEETEHTC) are disordered. Residues 499–509 (LLSSVSPGASK) show a composition bias toward polar residues. Residue Ser-516 is modified to Phosphoserine; by RPS6KA1.

Belongs to the MiT/TFE family. Homodimer or heterodimer; dimerization is mediated via the coiled coil region. Efficient DNA binding requires dimerization with another bHLH protein. Binds DNA in the form of homodimer or heterodimer with either TFE3, TFEB or TFEC. Interacts with small GTPases Rag (RagA/RRAGA, RagB/RRAGB, RagC/RRAGC and/or RagD/RRAGD); promoting its recruitment to lysosomal membrane in the presence of nutrients. Interacts with KARS1. Identified in a complex with HINT1 and CTNNB1. Interacts with VSX2. In terms of processing, when nutrients are present, phosphorylation by MTOR at Ser-5 via non-canonical mTORC1 pathway promotes ubiquitination by the SCF(BTRC) complex, followed by degradation. Phosphorylation at Ser-405 significantly enhances the ability to bind the tyrosinase promoter. Phosphorylation by MARK3/cTAK1 at Ser-280 promotes association with 14-3-3/YWHA adapters and retention in the cytosol. Phosphorylated at Ser-180 and Ser-516 following KIT signaling, triggering a short live activation: Phosphorylation at Ser-180 and Ser-516 by MAPK and RPS6KA1, respectively, activate the transcription factor activity but also promote ubiquitination and subsequent degradation by the proteasome. Phosphorylated in response to blue light (415nm). Post-translationally, ubiquitinated by the SCF(BTRC) and SCF(FBXW11) complexes following phosphorylation ar Ser-5 by MTOR, leading to its degradation by the proteasome. Ubiquitinated following phosphorylation at Ser-180, leading to subsequent degradation by the proteasome. Deubiquitinated by USP13, preventing its degradation. As to expression, expressed in melanocytes (at protein level). In terms of tissue distribution, expressed in the retinal pigment epithelium, brain, and placenta. Expressed in the kidney. Expressed in the kidney and retinal pigment epithelium. As to expression, expressed in the kidney. In terms of tissue distribution, expressed in melanocytes.

The protein localises to the nucleus. The protein resides in the cytoplasm. It is found in the lysosome membrane. Functionally, transcription factor that acts as a master regulator of melanocyte survival and differentiation as well as melanosome biogenesis. Binds to M-boxes (5'-TCATGTG-3') and symmetrical DNA sequences (E-boxes) (5'-CACGTG-3') found in the promoter of pigmentation genes, such as tyrosinase (TYR). Involved in the cellular response to amino acid availability by acting downstream of MTOR: in the presence of nutrients, MITF phosphorylation by MTOR promotes its inactivation. Upon starvation or lysosomal stress, inhibition of MTOR induces MITF dephosphorylation, resulting in transcription factor activity. Plays an important role in melanocyte development by regulating the expression of tyrosinase (TYR) and tyrosinase-related protein 1 (TYRP1). Plays a critical role in the differentiation of various cell types, such as neural crest-derived melanocytes, mast cells, osteoclasts and optic cup-derived retinal pigment epithelium. The sequence is that of Microphthalmia-associated transcription factor from Homo sapiens (Human).